A 217-amino-acid chain; its full sequence is MRQFIISENTMQKTSFRNHQVKRFSSQRSTRRKPENQPTRVILFNKPYDVLPQFTDEAGRKTLKEFIPVQGVYAAGRLDRDSEGLLVLTNNGALQARLTQPGKRTGKIYYVQVEGIPTQDALEALRNGVTLNDGPTLPAGAELVEEPAWLWPRNPPIRERKSIPTSWLKITLYEGRNRQVRRMTAHVGFPTLRLIRYAMGDYSLDNLANGEWRDATD.

Asp-79 serves as the catalytic Nucleophile.

Belongs to the pseudouridine synthase RsuA family.

The enzyme catalyses uridine(2457) in 23S rRNA = pseudouridine(2457) in 23S rRNA. Responsible for synthesis of pseudouridine from uracil-2457 in 23S ribosomal RNA. The chain is Ribosomal large subunit pseudouridine synthase E (rluE) from Escherichia coli O6:H1 (strain CFT073 / ATCC 700928 / UPEC).